The sequence spans 294 residues: N-acetylmuramic acid 6-phosphate etherase (294 aa).

The SIS domain maps to 56–219 (TSYSLRNGGR…STLSMVSVGK (164 aa)). Glu-84 serves as the catalytic Proton donor. Glu-115 is a catalytic residue.

This sequence belongs to the GCKR-like family. MurNAc-6-P etherase subfamily. Homodimer.

The enzyme catalyses N-acetyl-D-muramate 6-phosphate + H2O = N-acetyl-D-glucosamine 6-phosphate + (R)-lactate. It participates in amino-sugar metabolism; 1,6-anhydro-N-acetylmuramate degradation. The protein operates within amino-sugar metabolism; N-acetylmuramate degradation. It functions in the pathway cell wall biogenesis; peptidoglycan recycling. In terms of biological role, specifically catalyzes the cleavage of the D-lactyl ether substituent of MurNAc 6-phosphate, producing GlcNAc 6-phosphate and D-lactate. Together with AnmK, is also required for the utilization of anhydro-N-acetylmuramic acid (anhMurNAc) either imported from the medium or derived from its own cell wall murein, and thus plays a role in cell wall recycling. The polypeptide is N-acetylmuramic acid 6-phosphate etherase (Francisella tularensis subsp. holarctica (strain LVS)).